A 173-amino-acid polypeptide reads, in one-letter code: MGTPCHYALFDLQPSFRLDLDKLATRYRELAREVHPDRFADASEREQRVALEKSAALNDAYQTLRSAPRRARYLLAISGHEVPQEVTVHDPDFLLQQMQWREELEELQDEADLDGVGVFKKRLKAAQDTLNEDFAGCWDAPGERDKAERLMRRMQFLDKLAQEVRQLEERLDD.

Positions 5–77 constitute a J domain; sequence CHYALFDLQP…PRRARYLLAI (73 aa).

The protein belongs to the HscB family. As to quaternary structure, interacts with HscA and stimulates its ATPase activity.

Functionally, co-chaperone involved in the maturation of iron-sulfur cluster-containing proteins. Seems to help targeting proteins to be folded toward HscA. In Pseudomonas putida (strain ATCC 700007 / DSM 6899 / JCM 31910 / BCRC 17059 / LMG 24140 / F1), this protein is Co-chaperone protein HscB homolog.